The following is a 62-amino-acid chain: Large ribosomal subunit protein uL29 (62 aa).

This sequence belongs to the universal ribosomal protein uL29 family.

This Syntrophotalea carbinolica (strain DSM 2380 / NBRC 103641 / GraBd1) (Pelobacter carbinolicus) protein is Large ribosomal subunit protein uL29.